The primary structure comprises 36 residues: Photosystem I reaction center subunit VIII (36 aa).

The chain crosses the membrane as a helical span at residues 8-28 (AILVPIVGLVFPALSMALFFI).

The protein belongs to the PsaI family.

The protein localises to the plastid. The protein resides in the chloroplast thylakoid membrane. Functionally, may help in the organization of the PsaL subunit. This Phaeodactylum tricornutum (strain CCAP 1055/1) protein is Photosystem I reaction center subunit VIII.